Consider the following 125-residue polypeptide: Holo-[acyl-carrier-protein] synthase (125 aa).

Mg(2+) contacts are provided by Asp8 and Glu57.

This sequence belongs to the P-Pant transferase superfamily. AcpS family. Mg(2+) serves as cofactor.

Its subcellular location is the cytoplasm. The enzyme catalyses apo-[ACP] + CoA = holo-[ACP] + adenosine 3',5'-bisphosphate + H(+). In terms of biological role, transfers the 4'-phosphopantetheine moiety from coenzyme A to a Ser of acyl-carrier-protein. The sequence is that of Holo-[acyl-carrier-protein] synthase from Geobacter sp. (strain M21).